The sequence spans 79 residues: Acyl carrier protein (79 aa).

One can recognise a Carrier domain in the interval 2-77 (DNIEQRVKKI…QAIDYARANV (76 aa)). Ser37 bears the O-(pantetheine 4'-phosphoryl)serine mark.

This sequence belongs to the acyl carrier protein (ACP) family. In terms of processing, 4'-phosphopantetheine is transferred from CoA to a specific serine of apo-ACP by AcpS. This modification is essential for activity because fatty acids are bound in thioester linkage to the sulfhydryl of the prosthetic group.

It is found in the cytoplasm. It functions in the pathway lipid metabolism; fatty acid biosynthesis. Functionally, carrier of the growing fatty acid chain in fatty acid biosynthesis. This Burkholderia cenocepacia (strain HI2424) protein is Acyl carrier protein.